The following is a 465-amino-acid chain: Catalase cnsD (465 aa).

H39 is a catalytic residue. A heme-binding site is contributed by Y331.

The protein belongs to the catalase family. Heme serves as cofactor.

It participates in alkaloid biosynthesis. Catalase; part of the gene cluster that mediates the biosynthesis of communesins, a prominent class of indole alkaloids with great potential as pharmaceuticals. Communesins are biosynthesized by the coupling of tryptamine and aurantioclavine, two building blocks derived from L-tryptophan. The L-tryptophan decarboxylase cnsB converts L-tryptophan to tryptamine, whereas the tryptophan dimethylallyltransferase cnsF converts L-tryptophan to 4-dimethylallyl tryptophan which is further transformed to aurantioclavine by the aurantioclavine synthase cnsA, probably aided by the catalase cnsD. The cytochrome P450 monooxygenase cnsC catalyzes the heterodimeric coupling between the two different indole moieties, tryptamine and aurantioclavine, to construct vicinal quaternary stereocenters and yield the heptacyclic communesin scaffold. The O-methyltransferase cnsE then methylates the communesin scaffold to produce communesin K, the simplest characterized communesin that contains the heptacyclic core. The dioxygenase cnsJ converts communesin K into communesin I. Acylation to introduce the hexadienyl group at position N16 of communesin I by the acyltransferase cnsK leads to the production of communesin B. The hexadienyl group is produced by the highly reducing polyketide synthase cnsI, before being hydrolytically removed from cnsI by the serine hydrolase cnsH, converted into hexadienyl-CoA by the CoA ligase cnsG, and then transferred to communesin I by cnsK. Surprisingly, cnsK may also be a promiscuous acyltransferase that can tolerate a range of acyl groups, including acetyl-, propionyl-, and butyryl-CoA, which lead to communesins A, G and H respectively. The roles of the alpha-ketoglutarate-dependent dioxygenases cnsM and cnsP have still to be determined. In Penicillium expansum (Blue mold rot fungus), this protein is Catalase cnsD.